The chain runs to 339 residues: Glycerol-3-phosphate dehydrogenase [NAD(P)+] (339 aa).

Ser-14, Tyr-15, His-35, and Lys-109 together coordinate NADPH. Lys-109, Gly-138, and Thr-140 together coordinate sn-glycerol 3-phosphate. NADPH is bound at residue Ala-142. The sn-glycerol 3-phosphate site is built by Lys-194, Asp-247, Ser-257, Arg-258, and Asn-259. The active-site Proton acceptor is the Lys-194. Residue Arg-258 coordinates NADPH. NADPH is bound by residues Val-282 and Glu-284.

It belongs to the NAD-dependent glycerol-3-phosphate dehydrogenase family.

The protein localises to the cytoplasm. It catalyses the reaction sn-glycerol 3-phosphate + NAD(+) = dihydroxyacetone phosphate + NADH + H(+). It carries out the reaction sn-glycerol 3-phosphate + NADP(+) = dihydroxyacetone phosphate + NADPH + H(+). It participates in membrane lipid metabolism; glycerophospholipid metabolism. Functionally, catalyzes the reduction of the glycolytic intermediate dihydroxyacetone phosphate (DHAP) to sn-glycerol 3-phosphate (G3P), the key precursor for phospholipid synthesis. This is Glycerol-3-phosphate dehydrogenase [NAD(P)+] from Shewanella amazonensis (strain ATCC BAA-1098 / SB2B).